Here is a 77-residue protein sequence, read N- to C-terminus: UPF0401 protein ECP_3853 (77 aa).

The protein belongs to the UPF0401 family.

This Escherichia coli O6:K15:H31 (strain 536 / UPEC) protein is UPF0401 protein ECP_3853.